The following is a 536-amino-acid chain: Probable cytochrome P450 520A1 (536 aa).

A helical membrane pass occupies residues 1–21 (MEILTFIIYLITFFILFDFYK). A heme-binding site is contributed by C479.

This sequence belongs to the cytochrome P450 family. Heme is required as a cofactor.

Its subcellular location is the membrane. This is Probable cytochrome P450 520A1 (cyp520A1) from Dictyostelium discoideum (Social amoeba).